A 2554-amino-acid polypeptide reads, in one-letter code: Protein sevenless (2554 aa).

Positions 1 to 10 are enriched in polar residues; the sequence is MTMFWQQNVD. A disordered region spans residues 1–25; it reads MTMFWQQNVDHQSDEQDKQAKGAAP. Residues 1-2123 lie on the Extracellular side of the membrane; that stretch reads MTMFWQQNVD…AEPFVSPEKR (2123 aa). A compositionally biased stretch (basic and acidic residues) spans 11-20; that stretch reads HQSDEQDKQA. N-linked (GlcNAc...) asparagine glycosylation occurs at Asn30. Low complexity predominate over residues 51 to 70; the sequence is NQQAPGTSSSSSNSQNASPS. Residues 51 to 75 are disordered; the sequence is NQQAPGTSSSSSNSQNASPSKIVVR. Asn129 is a glycosylation site (N-linked (GlcNAc...) asparagine). The tract at residues 181-208 is disordered; it reads SRPQSTMAHHPDDRDRDRDPSEEQHGVD. Over residues 189-208 the composition is skewed to basic and acidic residues; it reads HHPDDRDRDRDPSEEQHGVD. Residues 440-533 enclose the Fibronectin type-III 1 domain; the sequence is APVIEHLMGL…GFVQTHSARN (94 aa). Asn481, Asn505, Asn617, and Asn647 each carry an N-linked (GlcNAc...) asparagine glycan. The 101-residue stretch at 824–924 folds into the Fibronectin type-III 2 domain; sequence AGGKPHSLKA…EPLAARTWPL (101 aa). N-linked (GlcNAc...) asparagine glycosylation occurs at Asn966. An LDL-receptor class B repeat occupies 1010–1053; that stretch reads GRVYWTDLARNCVVRMDPWSGSRELLPVFEANFLALDPRQGHLY. Fibronectin type-III domains are found at residues 1202-1290 and 1294-1397; these read LPDS…TPPV and QPRR…VAPE. 12 N-linked (GlcNAc...) asparagine glycosylation sites follow: Asn1228, Asn1313, Asn1353, Asn1550, Asn1557, Asn1639, Asn1725, Asn1756, Asn1804, Asn1889, Asn1947, and Asn2073. 3 Fibronectin type-III domains span residues 1801-1901, 1902-1988, and 1995-2117; these read PPRN…SFAE, LPEL…VYET, and QPGK…AEPF. A helical membrane pass occupies residues 2124 to 2147; sequence GSLVLAIIAPAAIVSSCVLALVLV. Residues 2148–2554 are Cytoplasmic-facing; that stretch reads RKVQKRRLRA…LYANEGVSRL (407 aa). Residues 2209 to 2485 form the Protein kinase domain; that stretch reads LKLLRFLGSG…RCYNTLHAIS (277 aa). ATP is bound by residues 2215-2223 and Lys2242; that span reads LGSGAFGEV. Residue Asp2343 is the Proton acceptor of the active site. Tyr2380 carries the post-translational modification Phosphotyrosine; by autocatalysis. The segment covering 2515 to 2527 has biased composition (basic and acidic residues); sequence GQPLEEHREHNER. Positions 2515 to 2534 are disordered; that stretch reads GQPLEEHREHNERPEDENLT.

Belongs to the protein kinase superfamily. Tyr protein kinase family. Insulin receptor subfamily. As to quaternary structure, may form a complex with drk and Sos. Binds the phosphotyrosine interaction domain (PID) of Dab.

It is found in the cell membrane. It carries out the reaction L-tyrosyl-[protein] + ATP = O-phospho-L-tyrosyl-[protein] + ADP + H(+). Functionally, receptor for an extracellular signal required to instruct a cell to differentiate into an R7 photoreceptor. The ligand for sev is the boss (bride of sevenless) protein on the surface of the neighboring R8 cell. The polypeptide is Protein sevenless (sev) (Drosophila melanogaster (Fruit fly)).